Here is a 412-residue protein sequence, read N- to C-terminus: NTEFAELKIRDKIFKLPILKASIGQDVIDISKVYSEADCFTYDPGFMSTASCRSTITYIDGDQGILRHRGYDIKDLAEKSDFLEVAYLLIYGELPNNKQYNDFTKKVAHHALVNERLHYLFQTFCSSSHPMAIMLAAVGSLSAFYPDLLNFFKEADYELTAIRMIAKIPTIAAMSYKYSIGQPFVYPDNSLDFTENFLHMMFATPCEKYKVNPVIKNALNKIFILHADHEQNASTSTVRIAGSSGANPFACVSTGIASLWGPAHGGANEAVINMLKEIGSVENIPKYIAKAKDKNDNFRLMGFGHRVYKNYDPRAAVLKETCKEVLKELGQLDNNPLLQIAIELEAIALKDEYFIERKLYPNVDFYSGIIYKAMGIPPQMFTVLFATARTVGWMAQWKEMHEDPEQKISRPR.

Catalysis depends on residues H305 and D364.

The protein belongs to the citrate synthase family.

The enzyme catalyses oxaloacetate + acetyl-CoA + H2O = citrate + CoA + H(+). The protein operates within carbohydrate metabolism; tricarboxylic acid cycle; isocitrate from oxaloacetate: step 1/2. The polypeptide is Citrate synthase (gltA) (Rickettsia bellii).